We begin with the raw amino-acid sequence, 499 residues long: Glucose-6-phosphate isomerase (499 aa).

The active-site Proton donor is the Glu-352. Active-site residues include His-383 and Lys-487.

Belongs to the GPI family.

Its subcellular location is the cytoplasm. The enzyme catalyses alpha-D-glucose 6-phosphate = beta-D-fructose 6-phosphate. Its pathway is carbohydrate biosynthesis; gluconeogenesis. It functions in the pathway carbohydrate degradation; glycolysis; D-glyceraldehyde 3-phosphate and glycerone phosphate from D-glucose: step 2/4. In terms of biological role, catalyzes the reversible isomerization of glucose-6-phosphate to fructose-6-phosphate. The chain is Glucose-6-phosphate isomerase from Legionella pneumophila (strain Paris).